Consider the following 74-residue polypeptide: Conotoxin VnMEKL-0221 (74 aa).

Residues 1 to 19 form the signal peptide; sequence MEKLTILLLVAAVLMWTQA. Residues 20–46 constitute a propeptide that is removed on maturation; that stretch reads LIQEKRPKEKIKFLSKRKTTAESWWEG. Cystine bridges form between cysteine 48–cysteine 62, cysteine 55–cysteine 66, and cysteine 61–cysteine 71.

Belongs to the conotoxin O2 superfamily. Expressed by the venom duct.

It localises to the secreted. This Conus ventricosus (Mediterranean cone) protein is Conotoxin VnMEKL-0221.